An 87-amino-acid polypeptide reads, in one-letter code: Sec-independent protein translocase protein TatA (87 aa).

Residues 1 to 21 form a helical membrane-spanning segment; that stretch reads MGGISIWQLLIIALIIVLLFG. The interval 54–87 is disordered; sequence NTEADADFEQKTLSKEEQQSEDPVQKSQKDKEQV.

It belongs to the TatA/E family. The Tat system comprises two distinct complexes: a TatABC complex, containing multiple copies of TatA, TatB and TatC subunits, and a separate TatA complex, containing only TatA subunits. Substrates initially bind to the TatABC complex, which probably triggers association of the separate TatA complex to form the active translocon.

It is found in the cell inner membrane. In terms of biological role, part of the twin-arginine translocation (Tat) system that transports large folded proteins containing a characteristic twin-arginine motif in their signal peptide across membranes. TatA could form the protein-conducting channel of the Tat system. The protein is Sec-independent protein translocase protein TatA of Photobacterium profundum (strain SS9).